Reading from the N-terminus, the 356-residue chain is MHHQWLLLAACFWVIFMFMVASKFITLTFKDPDGYSAKQEFVFLTTMPEAEKLRGEKHFPEVPKPTGKMLSDSRPDQPPVYLERLELIRNTCKEEALRNLSHTEVSKFVLDRIFVCDKHKILFCQTPKVGNTQWKKVLIVLNGAFSSIEEIPENVVHDHEKNGLPRLSSFSKIGIQKRLKTYFKFFIVRDPFERLISAFKDKFVHNPRFEPWYRHEIAPGIIRKYRKNRTETRGIQFEDFVRYLGDPNRRWLDLQFGDHIIHWVTYVELCAPCEIKYSVVGHHETLEADAPYILKEAGIDHLVSYPTIPPGITMYNRTKVEQYFLGISKRDIRRLYARFEGDFKLFGYQKPDFLLN.

Residues 1–6 (MHHQWL) are Cytoplasmic-facing. A helical; Signal-anchor for type II membrane protein transmembrane segment spans residues 7–27 (LLAACFWVIFMFMVASKFITL). At 28 to 356 (TFKDPDGYSA…GYQKPDFLLN (329 aa)) the chain is on the lumenal side. Asn99 is a glycosylation site (N-linked (GlcNAc...) asparagine). Residues 127–133 (PKVGNTQ) and 189–197 (RDPFERLIS) contribute to the 3'-phosphoadenylyl sulfate site. Asn228 and Asn316 each carry an N-linked (GlcNAc...) asparagine glycan.

Belongs to the sulfotransferase 2 family.

It localises to the golgi apparatus membrane. It carries out the reaction 3-O-{beta-D-GlcA-(1-&gt;[3)-alpha-D-Xyl-(1-&gt;3)-beta-D-GlcA-(1-&gt;](n)-4)-beta-D-Xyl-(1-&gt;4)-Rib-ol-P-Rib-ol-P-3-beta-D-GalNAc-(1-&gt;3)-beta-D-GlcNAc-(1-&gt;4)-O-6-P-alpha-D-Man}-L-Thr-[protein] + 3'-phosphoadenylyl sulfate = 3-O-{O-3-S-beta-D-GlcA-(1-&gt;[3)-alpha-D-Xyl-(1-&gt;3)-beta-D-GlcA-(1-&gt;](n)-4)-beta-D-Xyl-(1-&gt;4)-Rib-ol-P-Rib-ol-P-3-beta-D-GalNAc-(1-&gt;3)-beta-D-GlcNAc-(1-&gt;4)-O-6-P-alpha-D-Man}-L-Thr-[protein] + adenosine 3',5'-bisphosphate + H(+). The enzyme catalyses 17beta-estradiol 3-O-(beta-D-glucuronate) + 3'-phosphoadenylyl sulfate = 17beta-estradiol 3-O-(3-sulfo-beta-D-glucuronate) + adenosine 3',5'-bisphosphate + H(+). The catalysed reaction is 17beta-estradiol 3-O-(beta-D-glucuronate) 17-sulfate + 3'-phosphoadenylyl sulfate = 17beta-estradiol 3-O-(3-sulfo-beta-D-glucuronate) 17-sulfate + adenosine 3',5'-bisphosphate + H(+). It catalyses the reaction 17beta-estradiol 17-O-(beta-D-glucuronate) + 3'-phosphoadenylyl sulfate = 17beta-estradiol 17-O-(3-sulfo-beta-D-glucuronate) + adenosine 3',5'-bisphosphate + H(+). It carries out the reaction 16alpha,17beta-estriol 3-O-(beta-D-glucuronate) + 3'-phosphoadenylyl sulfate = 16alpha,17beta-estriol 3-O-(3-sulfo-beta-D-glucuronate) + adenosine 3',5'-bisphosphate + H(+). The enzyme catalyses 16alpha,17beta-estriol 16-O-(beta-D-glucuronate) + 3'-phosphoadenylyl sulfate = 16alpha,17beta-estriol 16-O-(3-sulfo-beta-D-glucuronate) + adenosine 3',5'-bisphosphate + H(+). The catalysed reaction is 16alpha,17beta-estriol 17-O-(beta-D-glucuronate) + 3'-phosphoadenylyl sulfate = 16alpha,17beta-estriol 17-O-(3-sulfo-beta-D-glucuronate) + adenosine 3',5'-bisphosphate + H(+). It catalyses the reaction estrone 3-O-(beta-D-glucuronate) + 3'-phosphoadenylyl sulfate = estrone 3-O-(3-sulfo-beta-D-glucuronate) + adenosine 3',5'-bisphosphate + H(+). It carries out the reaction 3alpha,20alpha-dihydroxy-5beta-pregnane 3-O-(beta-D-glucuronate) + 3'-phosphoadenylyl sulfate = 3alpha,20alpha-dihydroxy-5beta-pregnane 3-O-(3-sulfo-beta-D-glucuronate) + adenosine 3',5'-bisphosphate + H(+). The enzyme catalyses testosterone 17-O-(beta-D-glucuronate) + 3'-phosphoadenylyl sulfate = testosterone 17-O-(3-sulfo-beta-D-glucuronate) + adenosine 3',5'-bisphosphate + H(+). The catalysed reaction is 3beta-androst-5-en-17-one 3-O-(beta-D-glucuronate) + 3'-phosphoadenylyl sulfate = 3beta-androst-5-en-17-one 3-O-(3-sulfo-beta-D-glucuronate) + adenosine 3',5'-bisphosphate + H(+). It catalyses the reaction 3alpha,17alpha-dihydroxy-5beta-androstane-11-one-17beta-carboxylate 3-O-(beta-D-glucuronate) + 3'-phosphoadenylyl sulfate = 3alpha,17alpha-dihydroxy-5beta-androstane-11-one-17beta-carboxylate 3-O-(3-sulfo-beta-D-glucuronate) + adenosine 3',5'-bisphosphate + H(+). It carries out the reaction 3alpha-hydroxyetiocholan-17-one 3-O-(beta-D-glucuronate) + 3'-phosphoadenylyl sulfate = 3alpha-hydroxyetiocholan-17-one 3-O-(3-sulfo-beta-D-glucuronate) + adenosine 3',5'-bisphosphate + H(+). The protein operates within steroid metabolism. It functions in the pathway protein modification; carbohydrate sulfation. Functionally, catalyzes the transfer of sulfate from 3'-phosphoadenylyl sulfate (PAPS) to position 3 of terminal glucuronic acid of both protein- and lipid-linked oligosaccharides. Participates in biosynthesis of HNK-1 carbohydrate structure 3-O-sulfo-beta-D-GlcA-(1-&gt;3)-beta-D-Gal-(1-&gt;4)-D-GlcNAc-R, a sulfated glucuronyl-lactosaminyl residue carried by many neural recognition molecules, which is involved in cell interactions during ontogenetic development and in synaptic plasticity in the adult. May be indirectly involved in synapse plasticity of the hippocampus, via its role in HNK-1 biosynthesis. Sulfates terminal glucuronyl residue of the laminin globular (LG)-domain binding epitope on DAG1/alpha-dystroglycan and prevents further polymerization by LARGE1 glycosyltransferase. Likely defines the chain length of LG epitope, conferring binding specificity to extracellular matrix components. Plays a role in down-regulating the steroid hormones. Sulfates glucuronidated estrogens and androgens with an impact in hormone cycle and fertility. Has a preference for glucuronyl moiety at the 3-hydroxyl group of a sterol ring rather than the 17-hydroxyl group, showing high catalytic efficiency for 17beta-estradiol 3-O-(beta-D-glucuronate) and dehydroepiandrosterone 3-O-(beta-D-glucuronate) hormones. This is Carbohydrate sulfotransferase 10 from Mus musculus (Mouse).